A 343-amino-acid chain; its full sequence is Heat-inducible transcription repressor HrcA (343 aa).

Belongs to the HrcA family.

Its function is as follows. Negative regulator of class I heat shock genes (grpE-dnaK-dnaJ and groELS operons). Prevents heat-shock induction of these operons. This chain is Heat-inducible transcription repressor HrcA, found in Bacillus pumilus (strain SAFR-032).